Here is a 616-residue protein sequence, read N- to C-terminus: Chaperone protein HscA (616 aa).

This sequence belongs to the heat shock protein 70 family.

Chaperone involved in the maturation of iron-sulfur cluster-containing proteins. Has a low intrinsic ATPase activity which is markedly stimulated by HscB. Involved in the maturation of IscU. This Citrobacter koseri (strain ATCC BAA-895 / CDC 4225-83 / SGSC4696) protein is Chaperone protein HscA.